Reading from the N-terminus, the 91-residue chain is MGRSLKKGPFIADSLLRKLEKQNADDDKSVIKTWSRASTILPMMIGHTIAVHNGRSHVPVFITEQMVGHKLGEFAPTRTFKGHIKDKKGGR.

Belongs to the universal ribosomal protein uS19 family.

Its function is as follows. Protein S19 forms a complex with S13 that binds strongly to the 16S ribosomal RNA. The chain is Small ribosomal subunit protein uS19 from Prochlorococcus marinus (strain MIT 9303).